Consider the following 193-residue polypeptide: Large ribosomal subunit protein bL25 (193 aa).

The protein belongs to the bacterial ribosomal protein bL25 family. CTC subfamily. As to quaternary structure, part of the 50S ribosomal subunit; part of the 5S rRNA/L5/L18/L25 subcomplex. Contacts the 5S rRNA. Binds to the 5S rRNA independently of L5 and L18.

In terms of biological role, this is one of the proteins that binds to the 5S RNA in the ribosome where it forms part of the central protuberance. The chain is Large ribosomal subunit protein bL25 from Hydrogenovibrio crunogenus (strain DSM 25203 / XCL-2) (Thiomicrospira crunogena).